The primary structure comprises 443 residues: Xaa-Pro dipeptidase (443 aa).

Mn(2+) contacts are provided by Asp-246, Asp-257, His-339, Glu-384, and Glu-423.

The protein belongs to the peptidase M24B family. Bacterial-type prolidase subfamily. The cofactor is Mn(2+).

It catalyses the reaction Xaa-L-Pro dipeptide + H2O = an L-alpha-amino acid + L-proline. Splits dipeptides with a prolyl residue in the C-terminal position. In Yersinia pestis bv. Antiqua (strain Nepal516), this protein is Xaa-Pro dipeptidase.